The following is a 364-amino-acid chain: Anhydro-N-acetylmuramic acid kinase (364 aa).

Residue Gly11–Asp18 coordinates ATP.

Belongs to the anhydro-N-acetylmuramic acid kinase family.

The catalysed reaction is 1,6-anhydro-N-acetyl-beta-muramate + ATP + H2O = N-acetyl-D-muramate 6-phosphate + ADP + H(+). It functions in the pathway amino-sugar metabolism; 1,6-anhydro-N-acetylmuramate degradation. The protein operates within cell wall biogenesis; peptidoglycan recycling. Functionally, catalyzes the specific phosphorylation of 1,6-anhydro-N-acetylmuramic acid (anhMurNAc) with the simultaneous cleavage of the 1,6-anhydro ring, generating MurNAc-6-P. Is required for the utilization of anhMurNAc either imported from the medium or derived from its own cell wall murein, and thus plays a role in cell wall recycling. The chain is Anhydro-N-acetylmuramic acid kinase from Pseudomonas savastanoi pv. phaseolicola (strain 1448A / Race 6) (Pseudomonas syringae pv. phaseolicola (strain 1448A / Race 6)).